The primary structure comprises 30 residues: Snaclec coagulation factor IX/factor X-binding protein subunit B (30 aa).

Cys-2 and Cys-13 form a disulfide bridge. A C-type lectin domain is found at 9–30; sequence YEGHCYRVFTEPQNWADAEKFC.

The protein belongs to the snaclec family. Heterodimer of subunits A and B; disulfide-linked. In terms of processing, glycosylated. In terms of tissue distribution, expressed by the venom gland.

Its subcellular location is the secreted. Anticoagulant protein which binds to the gamma-carboxyglutamic acid-domain regions of factors IX (F9) and factor X (F10) in the presence of calcium with a 1 to 1 stoichiometry. The polypeptide is Snaclec coagulation factor IX/factor X-binding protein subunit B (Bothrops jararaca (Jararaca)).